The primary structure comprises 483 residues: Glutamyl-tRNA(Gln) amidotransferase subunit A (483 aa).

Catalysis depends on charge relay system residues Lys75 and Ser150. Ser174 acts as the Acyl-ester intermediate in catalysis.

This sequence belongs to the amidase family. GatA subfamily. In terms of assembly, heterotrimer of A, B and C subunits.

The enzyme catalyses L-glutamyl-tRNA(Gln) + L-glutamine + ATP + H2O = L-glutaminyl-tRNA(Gln) + L-glutamate + ADP + phosphate + H(+). Functionally, allows the formation of correctly charged Gln-tRNA(Gln) through the transamidation of misacylated Glu-tRNA(Gln) in organisms which lack glutaminyl-tRNA synthetase. The reaction takes place in the presence of glutamine and ATP through an activated gamma-phospho-Glu-tRNA(Gln). This is Glutamyl-tRNA(Gln) amidotransferase subunit A from Microcystis aeruginosa (strain NIES-843 / IAM M-2473).